Reading from the N-terminus, the 488-residue chain is Cobyric acid synthase (488 aa).

Positions 255–442 (ALKIAVPVLP…LHGLFGSDAY (188 aa)) constitute a GATase cobBQ-type domain. Cys337 serves as the catalytic Nucleophile. His434 is an active-site residue.

The protein belongs to the CobB/CobQ family. CobQ subfamily.

The protein operates within cofactor biosynthesis; adenosylcobalamin biosynthesis. Catalyzes amidations at positions B, D, E, and G on adenosylcobyrinic A,C-diamide. NH(2) groups are provided by glutamine, and one molecule of ATP is hydrogenolyzed for each amidation. The protein is Cobyric acid synthase of Rhizobium johnstonii (strain DSM 114642 / LMG 32736 / 3841) (Rhizobium leguminosarum bv. viciae).